The following is a 196-amino-acid chain: MNLVPTVIEQSSRGERAYDIYSRLLKDRIIMLSGPIEDNMANSIVAQLLFLDAQDSTKDIYLYINSPGGVVTSGMAIYDTMNFIKSDVQTIVIGMAASMASVLVSSGTKGKRFGLPHSTVMIHQPSGGAQGQQTEIQIAAEEILKTRKMINEILAKNSGQSFEQVEQDTERDHYLTAQEAVDYGLLDGVMDSNNLK.

The Nucleophile role is filled by serine 98. Residue histidine 123 is part of the active site.

Belongs to the peptidase S14 family. As to quaternary structure, fourteen ClpP subunits assemble into 2 heptameric rings which stack back to back to give a disk-like structure with a central cavity, resembling the structure of eukaryotic proteasomes.

The protein resides in the cytoplasm. The catalysed reaction is Hydrolysis of proteins to small peptides in the presence of ATP and magnesium. alpha-casein is the usual test substrate. In the absence of ATP, only oligopeptides shorter than five residues are hydrolyzed (such as succinyl-Leu-Tyr-|-NHMec, and Leu-Tyr-Leu-|-Tyr-Trp, in which cleavage of the -Tyr-|-Leu- and -Tyr-|-Trp bonds also occurs).. In terms of biological role, cleaves peptides in various proteins in a process that requires ATP hydrolysis. Has a chymotrypsin-like activity. Plays a major role in the degradation of misfolded proteins. The polypeptide is ATP-dependent Clp protease proteolytic subunit (Limosilactobacillus fermentum (strain NBRC 3956 / LMG 18251) (Lactobacillus fermentum)).